A 222-amino-acid chain; its full sequence is Cytochrome b6 (222 aa).

Residues 39 to 59 form a helical membrane-spanning segment; that stretch reads IFYCLGGITLVCFIIQFATGF. Cys42 lines the heme c pocket. Residues His93 and His107 each contribute to the heme b site. Helical transmembrane passes span 97-117, 123-143, and 193-213; these read ASMM…TGGF, LTWM…VTGY, and LHTF…FLMI. Heme b is bound by residues His194 and His209.

It belongs to the cytochrome b family. PetB subfamily. The 4 large subunits of the cytochrome b6-f complex are cytochrome b6, subunit IV (17 kDa polypeptide, PetD), cytochrome f and the Rieske protein, while the 4 small subunits are PetG, PetL, PetM and PetN. The complex functions as a dimer. The cofactor is heme b. Heme c is required as a cofactor.

It localises to the cellular thylakoid membrane. Functionally, component of the cytochrome b6-f complex, which mediates electron transfer between photosystem II (PSII) and photosystem I (PSI), cyclic electron flow around PSI, and state transitions. The chain is Cytochrome b6 from Rippkaea orientalis (strain PCC 8801 / RF-1) (Cyanothece sp. (strain PCC 8801)).